The chain runs to 204 residues: Sperm acrosome developmental regulator (204 aa).

Ser-65 is subject to Phosphoserine. Residues Arg-172–Ala-184 show a composition bias toward basic residues. Residues Arg-172–Leu-204 form a disordered region.

The protein localises to the cytoplasmic vesicle. Its subcellular location is the secretory vesicle. It localises to the acrosome. Functionally, may play an important role in acrosome formation and nucleus shaping during spermiogenesis. This is Sperm acrosome developmental regulator (SPACDR) from Bos taurus (Bovine).